A 115-amino-acid chain; its full sequence is Large ribosomal subunit protein uL18 (115 aa).

Residues 1–20 (MKYTKQEARKRRHYRVRSKV) form a disordered region. Positions 8-18 (ARKRRHYRVRS) are enriched in basic residues.

It belongs to the universal ribosomal protein uL18 family. As to quaternary structure, part of the 50S ribosomal subunit; part of the 5S rRNA/L5/L18/L25 subcomplex. Contacts the 5S and 23S rRNAs.

Functionally, this is one of the proteins that bind and probably mediate the attachment of the 5S RNA into the large ribosomal subunit, where it forms part of the central protuberance. The protein is Large ribosomal subunit protein uL18 of Mesoplasma florum (strain ATCC 33453 / NBRC 100688 / NCTC 11704 / L1) (Acholeplasma florum).